A 132-amino-acid chain; its full sequence is Small ribosomal subunit protein uS8 (132 aa).

It belongs to the universal ribosomal protein uS8 family. In terms of assembly, part of the 30S ribosomal subunit. Contacts proteins S5 and S12.

Functionally, one of the primary rRNA binding proteins, it binds directly to 16S rRNA central domain where it helps coordinate assembly of the platform of the 30S subunit. This Coprothermobacter proteolyticus (strain ATCC 35245 / DSM 5265 / OCM 4 / BT) protein is Small ribosomal subunit protein uS8.